The chain runs to 1007 residues: Glutamate receptor ionotropic, delta-2 (1007 aa).

The first 23 residues, 1–23, serve as a signal peptide directing secretion; that stretch reads MEVFPLLFFLSFWWSRTWDLATS. The interval 24 to 345 is interaction with CBLN1 homotrimer; it reads DSIIHIGAIF…NAFHKKLEDR (322 aa). At 24–566 the chain is on the extracellular side; the sequence is DSIIHIGAIF…DMFACLAPFD (543 aa). Cystine bridges form between cysteine 83/cysteine 355, cysteine 99/cysteine 131, and cysteine 298/cysteine 310. N-linked (GlcNAc...) asparagine glycosylation is present at asparagine 293. A glycan (N-linked (GlcNAc...) asparagine) is linked at asparagine 426. The chain crosses the membrane as a helical span at residues 567-587; the sequence is LSLWACIAGTVLLVGLLVYLL. The Cytoplasmic portion of the chain corresponds to 588-635; sequence NWLNPPRLQMGSMTSTTLYNSMWFVYGSFVQQGGEVPYTTLATRMMMG. The helical transmembrane segment at 636–656 threads the bilayer; sequence AWWLFALIVISSYTANLAAFL. Topologically, residues 657–830 are extracellular; that stretch reads TITRIESSIQ…QKGGALDIKS (174 aa). Residues asparagine 713 and asparagine 716 are each glycosylated (N-linked (GlcNAc...) asparagine). The helical transmembrane segment at 831–851 threads the bilayer; that stretch reads LAGVFCILAAGIVLSCLIAVL. At 852–1007 the chain is on the cytoplasmic side; the sequence is ETWWSRRKGS…GNDPDRGTSI (156 aa). The residue at position 883 (serine 883) is a Phosphoserine. Threonine 886 carries the phosphothreonine modification. Serine 890 carries the post-translational modification Phosphoserine. The tract at residues 921-991 is interaction with AP4M1; sequence DFRNTHITTT…MSSIPYQPTP (71 aa). The short motif at 1005–1007 is the PDZ-binding element; sequence TSI. Serine 1006 bears the Phosphoserine mark.

This sequence belongs to the glutamate-gated ion channel (TC 1.A.10.1) family. GRID2 subfamily. In terms of assembly, tetramer; dimer of dimers. Interacts with AP4M1. Interacts with EML2. Interacts with MAGI2 (via PDZ domains). Interacts with BECN1, GOPC, GRID2IP, SHANK1 and SHANK2. Interacts with CBLN2, but not with CBLN4. Interacts with CBLN1 (via C1q domain); the interaction is CBLN1-NRX1 complex formation-dependent; CBLN1-binding is calcium-independent; CBLN1 hexamers anchor GRID2 N-terminal domain dimers to monomeric NRXN1 isoform beta; promotes synaptogenesis and mediates the D-Serine-dependent long term depression signals and AMPA receptor endocytosis. As to expression, expressed at high levels in the cerebellar Purkinje cell layer, almost absent in the forebrain.

Its subcellular location is the postsynaptic cell membrane. It catalyses the reaction Ca(2+)(in) = Ca(2+)(out). The catalysed reaction is Na(+)(in) = Na(+)(out). In terms of biological role, member of the ionotropic glutamate receptor family, which plays a crucial role in synaptic organization and signal transduction in the central nervous system. Although it shares structural features with ionotropic glutamate receptors, does not bind glutamate as a primary ligand. Promotes synaptogenesis and mediates the D-Serine-dependent long term depression signals and AMPA receptor endocytosis of cerebellar parallel fiber-Purkinje cell (PF-PC) synapses through the NRX1B-CBLN1-GRID2 triad complex. In the presence of neurexins and cerebellins, forms cation-selective channels that are proposed to be gated by glycine and D-serine. However, recent research disputes this ligand-gated cation channel activity. Cation-selective ion channel activity can be triggered by GRM1 in Purkinje cells. This Rattus norvegicus (Rat) protein is Glutamate receptor ionotropic, delta-2 (Grid2).